A 156-amino-acid chain; its full sequence is Ribosomal RNA large subunit methyltransferase H (156 aa).

S-adenosyl-L-methionine contacts are provided by residues Leu-72, Gly-104, and 123–128; that span reads FGAMVW.

Belongs to the RNA methyltransferase RlmH family. Homodimer.

The protein resides in the cytoplasm. The enzyme catalyses pseudouridine(1915) in 23S rRNA + S-adenosyl-L-methionine = N(3)-methylpseudouridine(1915) in 23S rRNA + S-adenosyl-L-homocysteine + H(+). In terms of biological role, specifically methylates the pseudouridine at position 1915 (m3Psi1915) in 23S rRNA. The chain is Ribosomal RNA large subunit methyltransferase H from Ruegeria pomeroyi (strain ATCC 700808 / DSM 15171 / DSS-3) (Silicibacter pomeroyi).